The primary structure comprises 343 residues: Ferrochelatase (343 aa).

Fe cation contacts are provided by His191 and Glu270.

It belongs to the ferrochelatase family.

The protein resides in the cytoplasm. It catalyses the reaction heme b + 2 H(+) = protoporphyrin IX + Fe(2+). It functions in the pathway porphyrin-containing compound metabolism; protoheme biosynthesis; protoheme from protoporphyrin-IX: step 1/1. Functionally, catalyzes the ferrous insertion into protoporphyrin IX. The chain is Ferrochelatase from Phenylobacterium zucineum (strain HLK1).